Here is a 305-residue protein sequence, read N- to C-terminus: uncharacterized protein (305 aa).

Helical transmembrane passes span 4–24 (LNIY…FNLA), 38–58 (AWRF…TEGI), 67–87 (AVSY…LFFV), 95–115 (VNGA…ARII), 125–145 (VLGI…GSIE), 152–172 (ISGG…YGVL), 183–203 (LSTT…VSLF), 215–235 (IGVW…GYLW), 250–270 (LFFN…GTPI), and 272–292 (VFQV…SGVI). 2 EamA domains span residues 15-140 (IFTG…LVIT) and 164-290 (VCWA…TASG).

It belongs to the EamA transporter family.

It is found in the cell membrane. This is an uncharacterized protein from Bacillus subtilis (strain 168).